A 517-amino-acid polypeptide reads, in one-letter code: Acetylcholine receptor subunit delta (517 aa).

The signal sequence occupies residues methionine 1–glycine 21. The Extracellular segment spans residues leucine 22–lysine 245. 3 N-linked (GlcNAc...) asparagine glycosylation sites follow: asparagine 97, asparagine 164, and asparagine 190. The cysteines at positions 151 and 165 are disulfide-linked. A run of 3 helical transmembrane segments spans residues proline 246–leucine 270, threonine 278–serine 296, and phenylalanine 312–isoleucine 333. Residues histidine 334–arginine 471 are Cytoplasmic-facing. Position 390 is a phosphotyrosine; by Tyr-kinases (tyrosine 390). The chain crosses the membrane as a helical span at residues leucine 472–leucine 490.

It belongs to the ligand-gated ion channel (TC 1.A.9) family. Acetylcholine receptor (TC 1.A.9.1) subfamily. Delta/CHRND sub-subfamily. As to quaternary structure, pentamer of two alpha chains, and one each of the beta, delta, and gamma (in immature muscle) or epsilon (in mature muscle) chains. The muscle heteropentamer composed of alpha-1, beta-1, delta, epsilon subunits interacts with the alpha-conotoxin ImII.

It is found in the postsynaptic cell membrane. The protein resides in the cell membrane. The catalysed reaction is K(+)(in) = K(+)(out). It carries out the reaction Na(+)(in) = Na(+)(out). Functionally, after binding acetylcholine, the AChR responds by an extensive change in conformation that affects all subunits and leads to opening of an ion-conducting channel across the plasma membrane. This Rattus norvegicus (Rat) protein is Acetylcholine receptor subunit delta (Chrnd).